The following is a 94-amino-acid chain: Large ribosomal subunit protein bL25 (94 aa).

Belongs to the bacterial ribosomal protein bL25 family. As to quaternary structure, part of the 50S ribosomal subunit; part of the 5S rRNA/L5/L18/L25 subcomplex. Contacts the 5S rRNA. Binds to the 5S rRNA independently of L5 and L18.

Functionally, this is one of the proteins that binds to the 5S RNA in the ribosome where it forms part of the central protuberance. The protein is Large ribosomal subunit protein bL25 of Escherichia coli O157:H7.